A 415-amino-acid chain; its full sequence is Transposase for insertion sequence element IS1081 (415 aa).

Belongs to the transposase mutator family.

In terms of biological role, required for the transposition of the insertion element. The polypeptide is Transposase for insertion sequence element IS1081 (Mycobacterium bovis (strain ATCC BAA-935 / AF2122/97)).